We begin with the raw amino-acid sequence, 223 residues long: UPF0441 protein KPN78578_33850 (223 aa).

The tract at residues 165-223 (SYGAAQPGRTMNVPKTAMAPKPATTTTVTRGGFGESVAKQSTMQRSAAGSTSSSRSMGG) is disordered. Composition is skewed to low complexity over residues 177–193 (VPKT…TTVT) and 209–223 (RSAA…SMGG).

Belongs to the UPF0441 family.

The protein is UPF0441 protein KPN78578_33850 of Klebsiella pneumoniae subsp. pneumoniae (strain ATCC 700721 / MGH 78578).